Consider the following 294-residue polypeptide: Casein kinase II subunit beta (294 aa).

Disordered stretches follow at residues 66 to 90 (DHNT…SKRN) and 269 to 294 (KRME…MASE). Over residues 70–87 (DNTTTNTSNNNDSRNGTS) the composition is skewed to low complexity. Residues 273–288 (EDDEEEEDEVEEEDDD) show a composition bias toward acidic residues.

Belongs to the casein kinase 2 subunit beta family. Tetramer composed of two alpha chains, one beta chain and one beta' chain. In terms of processing, phosphorylated by alpha subunit.

Regulatory subunit of casein kinase II/CK2. As part of the kinase complex regulates the basal catalytic activity of the alpha subunit a constitutively active serine/threonine-protein kinase that phosphorylates a large number of substrates containing acidic residues C-terminal to the phosphorylated serine or threonine. The chain is Casein kinase II subunit beta (CKB1) from Candida albicans (Yeast).